The sequence spans 354 residues: MKVIGVTRDDDGPQLLERERPSPDPGEALVRTLRVGVDGTDHEVLNGSHGGFPDGADHMILGHEAVGVVEEPNGTGLEAGQVVAPTVRRKPNGETNEYFRRGEPDMAPDGEYTERGIVGDHGFMAEYFTSPADFLVPVPKSVAEYGFLVEPLSITEKANEHAYATREPFDWRPDSACVLGNGSLGLLTLWMLDQEYDRTYCVGRRDRPDPTVDIIDEIGSTYVDSRETPVDELPGAYEAMDYIYEATGFAPHAFQTVKALDQNGVGVLLGIPEPWEFEVDGGSLHNEIVLHNKCLIGTVNSHVSHFEDAVETLQELPAWLLDDLVTTVTDPEHVEAAFEDGDDQIKAVVEFDSL.

The tract at residues 1–27 is disordered; sequence MKVIGVTRDDDGPQLLERERPSPDPGE. Residues 7–22 are compositionally biased toward basic and acidic residues; that stretch reads TRDDDGPQLLERERPS. Residue aspartate 38 participates in Zn(2+) binding. Threonine 40 provides a ligand contact to substrate. Positions 63 and 64 each coordinate Zn(2+). Positions 91 to 110 are disordered; the sequence is PNGETNEYFRRGEPDMAPDG. Substrate-binding residues include glutamate 114 and glutamate 150. Position 150 (glutamate 150) interacts with Zn(2+). Residues 181 to 184, 204 to 205, 269 to 271, and 298 to 300 contribute to the NADP(+) site; these read NGSL, RR, LGI, and TVN. Asparagine 300 lines the substrate pocket.

It belongs to the zinc-containing alcohol dehydrogenase family. Glucose 1-dehydrogenase subfamily. Zn(2+) is required as a cofactor.

It carries out the reaction D-glucose + NAD(+) = D-glucono-1,5-lactone + NADH + H(+). It catalyses the reaction D-glucose + NADP(+) = D-glucono-1,5-lactone + NADPH + H(+). In terms of biological role, catalyzes the NAD(P)(+)-dependent oxidation of D-glucose to D-gluconate via gluconolactone. Can utilize both NAD(+) and NADP(+) as electron acceptor. Is involved in the degradation of glucose through a modified Entner-Doudoroff pathway. This is Glucose 1-dehydrogenase from Haloarcula marismortui (strain ATCC 43049 / DSM 3752 / JCM 8966 / VKM B-1809) (Halobacterium marismortui).